Reading from the N-terminus, the 784-residue chain is Endonuclease MutS2 (784 aa).

Position 335 to 342 (335 to 342 (GPNTGGKT)) interacts with ATP. A Smr domain is found at 709–784 (LDLRGERYED…GTGVTIVELK (76 aa)).

Belongs to the DNA mismatch repair MutS family. MutS2 subfamily. Homodimer. Binds to stalled ribosomes, contacting rRNA.

Endonuclease that is involved in the suppression of homologous recombination and thus may have a key role in the control of bacterial genetic diversity. Functionally, acts as a ribosome collision sensor, splitting the ribosome into its 2 subunits. Detects stalled/collided 70S ribosomes which it binds and splits by an ATP-hydrolysis driven conformational change. Acts upstream of the ribosome quality control system (RQC), a ribosome-associated complex that mediates the extraction of incompletely synthesized nascent chains from stalled ribosomes and their subsequent degradation. Probably generates substrates for RQC. This Geobacillus sp. (strain WCH70) protein is Endonuclease MutS2.